The sequence spans 160 residues: Putative UPF0479 protein YNL339W-B (160 aa).

A run of 2 helical transmembrane segments spans residues 39–59 (IVFCLPFFPALFFVPVQKVLQ) and 136–156 (VPMIWLDVFQVFFVFLVISQH).

The protein belongs to the UPF0479 family.

It is found in the membrane. The protein is Putative UPF0479 protein YNL339W-B of Saccharomyces cerevisiae (strain ATCC 204508 / S288c) (Baker's yeast).